The chain runs to 440 residues: Rhamnogalacturonase A (440 aa).

An N-terminal signal peptide occupies residues 1–18 (MRALFLLALGSIPALVSG). A disulfide bridge links cysteine 39 with cysteine 65. Asparagine 50 is a glycosylation site (N-linked (GlcNAc...) asparagine). Catalysis depends on aspartate 215, which acts as the Proton donor. Cysteine 217 and cysteine 234 are disulfide-bonded. Histidine 290 is an active-site residue. N-linked (GlcNAc...) asparagine glycosylation occurs at asparagine 317. Cystine bridges form between cysteine 340–cysteine 346 and cysteine 368–cysteine 377. Residue threonine 385 is glycosylated (O-linked (Man) threonine). O-linked (Man) serine glycosylation is present at serine 386. O-linked (Man) threonine glycosylation is found at threonine 388, threonine 389, and threonine 390. Serine 391 is a glycosylation site (O-linked (Man) serine). O-linked (Man) threonine glycosylation is found at threonine 392 and threonine 394. Serine 398 and serine 401 each carry an O-linked (Man) serine glycan. Threonine 403, threonine 404, and threonine 416 each carry an O-linked (Man) threonine glycan. Serine 418 carries O-linked (Man) serine glycosylation. 2 O-linked (Man) threonine glycosylation sites follow: threonine 423 and threonine 426. Residues serine 427 and serine 436 are each glycosylated (O-linked (Man) serine).

This sequence belongs to the glycosyl hydrolase 28 family. Post-translationally, the N-terminus is blocked. N-glycosylated and may also be O-glycosylated.

The protein localises to the secreted. The enzyme catalyses Endohydrolysis of alpha-D-GalA-(1-&gt;2)-alpha-L-Rha glycosidic bond in the rhamnogalacturonan I backbone with initial inversion of anomeric configuration releasing oligosaccharides with beta-D-GalA at the reducing end.. Pectinolytic enzymes consist of four classes of enzymes: pectine lyase, polygalacturonase, pectin methylesterase and rhamnogalacturonase. Has a positive effect in the apple hot-mash liquefaction process. Hydrolyzes alpha-D-galacturonopyranosyl-(1,2)-alpha-L-rhamnopyranosyl linkages in the backbone of the hairy regions of pectins. The sequence is that of Rhamnogalacturonase A (rhgA) from Aspergillus aculeatus.